Here is a 283-residue protein sequence, read N- to C-terminus: Elongation factor Ts (283 aa).

The involved in Mg(2+) ion dislocation from EF-Tu stretch occupies residues 79-82; it reads TDFV.

The protein belongs to the EF-Ts family.

The protein localises to the cytoplasm. Functionally, associates with the EF-Tu.GDP complex and induces the exchange of GDP to GTP. It remains bound to the aminoacyl-tRNA.EF-Tu.GTP complex up to the GTP hydrolysis stage on the ribosome. In Shewanella denitrificans (strain OS217 / ATCC BAA-1090 / DSM 15013), this protein is Elongation factor Ts.